The primary structure comprises 129 residues: Small ribosomal subunit protein uS11 (129 aa).

Belongs to the universal ribosomal protein uS11 family. As to quaternary structure, part of the 30S ribosomal subunit. Interacts with proteins S7 and S18. Binds to IF-3.

In terms of biological role, located on the platform of the 30S subunit, it bridges several disparate RNA helices of the 16S rRNA. Forms part of the Shine-Dalgarno cleft in the 70S ribosome. The sequence is that of Small ribosomal subunit protein uS11 from Sodalis glossinidius (strain morsitans).